The sequence spans 186 residues: Probable GTP-binding protein EngB (186 aa).

Residues 18-186 enclose the EngB-type G domain; it reads SKKEVCLIGR…LMLKIIDVIS (169 aa). GTP-binding positions include 26–33, 52–56, 69–72, 135–138, and 166–168; these read GRSNVGKS, GRTVT, DLPG, NKID, and ISA. Mg(2+) is bound by residues S33 and T54.

Belongs to the TRAFAC class TrmE-Era-EngA-EngB-Septin-like GTPase superfamily. EngB GTPase family. Requires Mg(2+) as cofactor.

Functionally, necessary for normal cell division and for the maintenance of normal septation. In Mycoplasmoides gallisepticum (strain R(low / passage 15 / clone 2)) (Mycoplasma gallisepticum), this protein is Probable GTP-binding protein EngB.